Here is a 527-residue protein sequence, read N- to C-terminus: MADSRDPASDQMQHWKEQRAAQKADVLTTGAGNPVGDKLNVITVGPRGPLLVQDVVFTDEMAHFDRERIPERVVHAKGAGAFGYFEVTHDITKYSKAKVFEHIGKKTPIAVRFSTVAGESGSADTVRDPRGFAVKFYTEDGNWDLVGNNTPIFFIRDPILFPSFIHSQKRNPQTHLKDPDMVWDFWSLRPESLHQVSFLFSDRGIPDGHRHMNGYGSHTFKLVNANGEAVYCKFHYKTDQGIKNLSVEDAARLSQEDPDYGIRDLFNAIATGKYPSWTFYIQVMTFNQAETFPFNPFDLTKVWPHKDYPLIPVGKLVLNRNPVNYFAEVEQIAFDPSNMPPGIEASPDKMLQGRLFAYPDTHRHRLGPNYLHIPVNCPYRARVANYQRDGPMCMQDNQGGAPNYYPNSFGAPEQQPSALEHSIQYSGEVRRFNTANDDNVTQVRAFYVNVLNEEQRKRLCENIAGHLKDAQIFIQKKAVKNFTEVHPDYGSHIQALLDKYNAEKPKNAIHTFVQSGSHLAAREKANL.

The residue at position 2 (alanine 2) is an N-acetylalanine. Serine 9 is modified (phosphoserine). Catalysis depends on residues histidine 75 and asparagine 148. The NADP(+) site is built by histidine 194, serine 201, arginine 203, and asparagine 213. The residue at position 221 (lysine 221) is an N6-succinyllysine. Lysine 233 bears the N6-acetyllysine mark. Lysine 237, tryptophan 303, histidine 305, and lysine 306 together coordinate NADP(+). At lysine 306 the chain carries N6-acetyllysine; alternate. Lysine 306 is subject to N6-succinyllysine; alternate. Tyrosine 358 contributes to the heme binding site. 2 positions are modified to phosphoserine: serine 417 and serine 422. N6-acetyllysine; alternate is present on lysine 480. An N6-succinyllysine; alternate modification is found at lysine 480. Residue lysine 499 is modified to N6-acetyllysine. The residue at position 511 (threonine 511) is a Phosphothreonine. Serine 515 and serine 517 each carry phosphoserine. Positions 524 to 527 (KANL) match the Microbody targeting signal; atypical motif.

It belongs to the catalase family. Homotetramer. Interacts (via microbody targeting signal) with PEX5, monomeric form interacts with PEX5, leading to its translocation into peroxisomes. Heme is required as a cofactor. NADP(+) serves as cofactor.

It is found in the peroxisome matrix. The enzyme catalyses 2 H2O2 = O2 + 2 H2O. Its function is as follows. Catalyzes the degradation of hydrogen peroxide (H(2)O(2)) generated by peroxisomal oxidases to water and oxygen, thereby protecting cells from the toxic effects of hydrogen peroxide. Promotes growth of cells including T-cells, B-cells, myeloid leukemia cells, melanoma cells, mastocytoma cells and normal and transformed fibroblast cells. This is Catalase (CAT) from Homo sapiens (Human).